The chain runs to 188 residues: Cytochrome b561 homolog 2 (188 aa).

Residues 1 to 15 (MSFTNTPERYGVISA) lie on the Cytoplasmic side of the membrane. Residues 16–36 (AFHWLSAIIVYGMFALGLWMV) traverse the membrane as a helical segment. Positions 18 and 52 each coordinate heme b. Residues 37 to 54 (TLSYYDGWYHKAPELHKS) lie on the Periplasmic side of the membrane. A helical membrane pass occupies residues 55 to 75 (IGILLMMGLVIRVLWRVISPP). At 76 to 91 (PGPLPSYSPMTRLAAR) the chain is on the cytoplasmic side. A helical transmembrane segment spans residues 92-112 (AGHLALYLLLFAIGISGYLIS). The Periplasmic segment spans residues 113–143 (TADGKPISVFGWFDVPATLADAGAQADFAGA). Residues 144-164 (LHFWLAWSVVVLSVMHGFMAL) traverse the membrane as a helical segment. Heme b is bound by residues His145 and His159. At 165-188 (KHHFIDKDDTLKRMLGKSSSDYGV) the chain is on the cytoplasmic side.

It belongs to the cytochrome b561 family. Requires heme b as cofactor.

It localises to the cell inner membrane. This Escherichia coli (strain K12) protein is Cytochrome b561 homolog 2 (yceJ).